The sequence spans 319 residues: Pantothenate kinase (319 aa).

97 to 104 (GSVAVGKS) is a binding site for ATP.

Belongs to the prokaryotic pantothenate kinase family.

The protein resides in the cytoplasm. The catalysed reaction is (R)-pantothenate + ATP = (R)-4'-phosphopantothenate + ADP + H(+). Its pathway is cofactor biosynthesis; coenzyme A biosynthesis; CoA from (R)-pantothenate: step 1/5. This Chelativorans sp. (strain BNC1) protein is Pantothenate kinase.